We begin with the raw amino-acid sequence, 3343 residues long: MTIRIFFSIFLLNHLIFFHLFNFTHQFSEETIKFSVSEDAKLNTIIGHLEAEIGYTYRLSRGNSKIKFDEQTLELSVSSPLDRESENAIDMLIITSPPSIIHILIDVLDVNDNSPIFPIDVQRVEIPETAPIGWRVQISGATDPDEGKNGTIGKYELVDSLATVDTMSPFGIVQSDGFLFLEVTGKLDRETRDLYSMRLTAIDQGVPELSSSCHLNILILDINDNPPNFGIRSLTLNWNGLPNTKLFSLNATDLDSNENSLLTYRILPSGPTSEMFSISDENILVTQNNTECLQRCEFVVEARDSGVPPLSTTLNIVVNMEYGNEHEPNINIRFYPSDYPFIIVQPEDVNGKTLAILSITDSDGPLGANSTIWIENGNEQSIFSLISRQSINILTVKHVENANQEQYILEFRANDGQSPADRITRKELKIFFKKYVKSTQIHVERESHVTVEKDTVPGSFVAHVETNCTDMCSFELANSDVFKIDPFNGIIVTSSILPEGVTSYHLPIRIHLPPPSTQLVEADVFVKVIQESVPKNLIRSSESPIHLKRAYTFTTWQDVSLGTVIGRLPKAQIYSTIDTVSELGVFPDGSVFVGKTITSDFVTLPVTLVNRNTTQTSIITLIVKPLNQHSPICQITEIHVLENAPIGTIFGRIQARDEDSGLSGVVSYKILTKSDDYDGIFHLDSTSGSLRSLKAFDAEKKRSYTFEYEAKDLGTPSKTTNCPATIFIEDVNDNVPKFGSRYYTATISGKSNETVAIVQANDNDVDVKNQKLQYHLLNYHDFFQLDKETGKVTTIQDVPMTWQRLNISISAVNMDSERFLQSKTFLLVTVTSSSKLAVQLNSGNLIRIFKNDKIGEKVGHLDIASSETVYWSTLDPRLHVDSSGNIILIRRNAKQASTGFDIILTSENGEKTEKVNFEVEFVDSERSEDVEKVMDIVLNENTTEVSNLMNDWKNWKISRVILENANNSGNNTFFLEHKKLWRTKNATVSNAYIILESEDQEGSPKSFKLLHVTTSPSPSSESSCISPAHLISPPSTVPLPSNCSNVKLQNLKTSLQIHENNLLIPTQSELINHVDLVSTQNSDMKPFMMTLIKDYLSEDVRFSTNNVLMLLSSIHPIGTSFGRVTAESGYRIRYYIVGTDKISIDADTGELILKERFYRNLNDILIVAVIPKGIAKAKITIEVIEDRLILPQSNFFIPSPPSFNSKSKIGKIPIDRDDVTIDVIDEHFYVRNFEIFVKRHFIPNSNFYDLKGTVKKGKLSAPISVTLFFGEKMKSREIRENELMFEIEENSPIGTVVGVVPNSDTTKYRLVDPTCGLLIDQEGIIRTTTVFDRENTSLLKTKMIEPSENRIWNLLIFIADVNDNKPKILNAPGRIIVYDDLNYKLEWEDLDAIASDVSFSIVDGDVFGNLEIEDSGVISLNSIPNESFNATIRIYDNRPPFKVHFDDVTIEFQVTQKLRAVTCEDAEFWMFFGNEDVGMLIASEIVTWRIVPQIGSDSFKIDPITGIIQSTPNTKPTSDIAKLKIQAISYDGERVGFCDVKIHIDKAAFVENVVLSNGTFEFNISETADRFTEVGKIVILGAGLEGSVFRIQDNDYNFTISPFDGTIFTNSPLDFENIKTYRFNITAGKSTSQVIIHVTDENDEAPRFITGDVVNLKVLEELDTVSYPLIIGSSIAEDLDEGQNGLVTYSILSGNTSLFAVNSTTGDILSLIPLDREESSLHELLIEAKDAGIPSLSATSKILIHVGDINDNTPEFELSSYFIKISENSKIGSKIIRILATDKDKDAELQYSLESNDEITIPFRINVATGWITVAGKVNREENEEFRFFVKVTDGEKSSKVIVEIHVEDFNDNHPMINDRNSDIFVPDPTRSVEIIHVINVHDLDKSDHLKFSLNNSNLNLSENGEITLKSPLQTAVPVRVTVSDDAGHVAFMEYLFHPHSRKHFPVFVEKLDTVSVREHDEQELAVFKANGDSIRYSIVSRCSDHLEMEKSTGILKTKSSLDAEEYSECLVFIIATTYFDNKPLSTITKATIKIVDINDNSPRFDQQLYRFNVTENSGPKLIGHVIARDIDRSSRVFYEIVGGDANHEFMVTESGQIESVRDLDRETKSEYHLIVEAIDDGKPRRRGNTTVIVTVLDEDDNAPRFSRIFHVEVPEDVRIGEPVIQLSASDADEHSNHRFELDGGGEGIPFRVDENTGMVFVNDSLDFEKKQSYRIKVKLTDGAWLIETSLFVNVKDVNDNAPIFEKPEYLFISEENSAEIGQFHASDMDSENNGKIRYSVTSPYFKIEPSTGVLSRFRQQLPQPLMSLKVTATDHGVPRLQKTVLAHLVDKSSFGKIKQRRIRETTKVGDVIGKKIDSGATIFPLDVATVTRDGDVVLKKNATQFWILENDTIYEFVKTDAMESTKNENITLNITSDISMNSDNFKVLRNGSLIVFGFSGNQAHLKIQCDDGFWPKQDRKIINLVVNNLDADRNSFPLARQPTIRKSMSLPKTMILNIPFDSPTGTIIWKNLENAVQYMENQKNVNFSNGSKNLILKTPLEETMQIDIFGQNFERSALTITPNRSLMACPVFQKNFYFFESVANLDSKHPTEIHNFGWSSDEIKGCQIDIFDKTHLFYQNGSSLIFLKPLLPGTYQFSLQIKSQSDSKIRSACHVVVTVIPPTNLTTWNIPSVIFATRNYNIPNLFHLPSGYSLSSDQRTFSLIGSGTGKNISKLSSGVYQVNVVGKDEKKEIVRILLDDVADDVTSKDIEYHVVSSTLSNLKIPTPIDVECFPRTEENLYEITKDCRLLFNSDVINTTIPVVTSPANSTWNLRIINESPETVKSLENNAVSLEIITQKSSIPRLITDLRVTYSDMKIYCLGTWQTSEDIKYHITFVIVDRNGVVIEESEARQTLTSFLKKHRPGYLDFVDFDKDPCDGVTCIQKNSTCQPTLVGDSASRLVSRSSSVIFDLPLKKLTARCFCSSGIDCYDDTTNETIQKTQKINVITTCDDIDCGPRGKCFMEESSQPICRCGQGFESMYSCERADDVFSMSTGGSVEISVRNGTSHLLKCSENCDGRDIQKIEFDFRTVQLEKSELFRVDFGKQVALIELIGGSLTFSITDAYARPIETRIEKRVNDGRWHRLLFQMSEDGRRISIQVNGRGKEVKSRVPLQMLFTAKKIQLMTPAAFCFRRLLAQNQFVHPILNRNKFFEISSTGTSRNECQFDSIQSGSGGFRLFSNFSNTTTLILLITLALISLIGFSVCLLAIRRRWRQKSPGDQKQTERSNGWTGHVMPRRRGHINRSMVKSPDDDTYDVATVYGMKSTSTDDITHIYTSSSSRRYQPPTAPSYRRDGHINMAYL.

A signal peptide spans 1 to 26 (MTIRIFFSIFLLNHLIFFHLFNFTHQ). N-linked (GlcNAc...) asparagine glycosylation occurs at N22. The Extracellular segment spans residues 27–3228 (FSEETIKFSV…LFSNFSNTTT (3202 aa)). Cadherin domains are found at residues 28–117 (SEET…SPIF), 118–229 (PIDV…PPNF), and 242–330 (PNTK…EPNI). N-linked (GlcNAc...) asparagine glycosylation is found at N149, N250, N288, N369, N467, and N612. The Cadherin 4 domain occupies 632 to 738 (ICQITEIHVL…EDVNDNVPKF (107 aa)). N752, N806, N941, N966, N970, N985, N1042, N1335, N1425, N1429, N1557, N1563, N1597, N1624, N1695, and N1702 each carry an N-linked (GlcNAc...) asparagine glycan. A Cadherin 5 domain is found at 1279–1368 (RENELMFEIE…ADVNDNKPKI (90 aa)). Cadherin domains are found at residues 1545 to 1648 (DKAA…APRF), 1676 to 1756 (AEDL…TPEF), and 1757 to 1857 (ELSS…HPMI). N-linked (GlcNAc...) asparagine glycans are attached at residues N1895 and N1900. Cadherin domains lie at 1954–2045 (TVSV…SPRF), 2046–2145 (DQQL…NAPR), and 2146–2245 (FSRI…APIF). N-linked (GlcNAc...) asparagine glycans are attached at residues N2053, N2129, N2203, N2382, N2391, N2410, N2414, N2431, N2527, N2530, N2564, N2621, N2665, N2712, N2798, N2809, N2927, N2976, and N3045. Residues 3040–3205 (EISVRNGTSH…SSTGTSRNEC (166 aa)) form the Laminin G-like domain. Residues C3172 and C3205 are joined by a disulfide bond. N-linked (GlcNAc...) asparagine glycosylation is found at N3222 and N3225. The chain crosses the membrane as a helical span at residues 3229–3250 (LILLITLALISLIGFSVCLLAI). The Cytoplasmic portion of the chain corresponds to 3251–3343 (RRRWRQKSPG…RDGHINMAYL (93 aa)). The interval 3257 to 3277 (KSPGDQKQTERSNGWTGHVMP) is disordered.

As to expression, expressed in the anchor cell.

It localises to the cell membrane. It is found in the basolateral cell membrane. Its subcellular location is the cell junction. Cell adhesion protein involved in the control of epithelial morphogenesis. Together with metalloproteinase zmp-1 and hemicentin him-4, plays a role in anchor cell (AC) invasion during postembryonic vulval development. This Caenorhabditis elegans protein is Cadherin-3 (cdh-3).